The sequence spans 93 residues: Sec-independent protein translocase protein TatA (93 aa).

A helical transmembrane segment spans residues 1–21; sequence MGAMSPWHWAIVALVVVILFG. A disordered region spans residues 44–93; the sequence is KEMQNDNSTPAPTAQQSAPAELPVADTTTAPVTPPAPVQPQPQHTEPKSA. Residues 51 to 74 show a composition bias toward low complexity; that stretch reads STPAPTAQQSAPAELPVADTTTAP.

It belongs to the TatA/E family. The Tat system comprises two distinct complexes: a TatABC complex, containing multiple copies of TatA, TatB and TatC subunits, and a separate TatA complex, containing only TatA subunits. Substrates initially bind to the TatABC complex, which probably triggers association of the separate TatA complex to form the active translocon.

The protein resides in the cell membrane. Its function is as follows. Part of the twin-arginine translocation (Tat) system that transports large folded proteins containing a characteristic twin-arginine motif in their signal peptide across membranes. TatA could form the protein-conducting channel of the Tat system. This chain is Sec-independent protein translocase protein TatA, found in Rhodococcus opacus (strain B4).